The primary structure comprises 587 residues: uncharacterized protein (587 aa).

The YcaO domain occupies 61 to 426; it reads GKGASKKAAL…DLPNWHHDAE (366 aa).

This is an uncharacterized protein from Haemophilus influenzae (strain ATCC 51907 / DSM 11121 / KW20 / Rd).